Reading from the N-terminus, the 495-residue chain is Protein SLENDER RICE1-LIKE 1 (495 aa).

The 373-residue stretch at 77–449 (EEEEVAGIRL…RPLFSASAWE (373 aa)) folds into the GRAS domain. Residues 84–140 (IRLVHLLMSCAGAIEAGDHALASAQLADSHAALAAVSAASGIGRVAVHFTTALSRRL) are leucine repeat I (LRI). Residues 158–223 (YHHFYEACPY…GGPPFLRITG (66 aa)) are VHIID. The short motif at 189–193 (VHVID) is the VHIID element. A leucine repeat II (LRII) region spans residues 237-269 (DVGLRLADLARSVRVRFSFRGVAANSLDEVRPW). The segment at 279–371 (VAFNSVLQLH…EAYLQREICD (93 aa)) is PFYRE. Positions 287–291 (LHRLL) match the LXXLL motif motif. Positions 374–449 (CGEGAARRER…RPLFSASAWE (76 aa)) are SAW. Residues 451–495 (AGDGGGDNNNNSNSNVSGSSGSDSNNSGSSNGKSSGARDGSSVCL) form a disordered region. Positions 458-485 (NNNNSNSNVSGSSGSDSNNSGSSNGKSS) are enriched in low complexity.

This sequence belongs to the GRAS family. Expressed in elongating internodes and flowers. Expressed in floral meristem, stamen primordia and tapetum in developing anthers. Expressed at low levels in roots, shoot apices and rachis.

The protein localises to the nucleus. Its function is as follows. Probable transcriptional regulator that acts as a repressor of the gibberellin (GA) signaling pathway. Its repressive activity is weaker than that of SLR1. Its overexpression prevents the GA signaling pathway and induces a dwarf phenotype. The sequence is that of Protein SLENDER RICE1-LIKE 1 from Oryza sativa subsp. japonica (Rice).